The chain runs to 334 residues: MAETDERSLRDLLLESADDLEHIVKMIVDTLINRDKSVMLKNGETVTNIIKLFDSKQDSIKTLLKRVPEFQEREQLIRTLEAHVEKRDEVIQQLETNLKSCEVALTRSCFHANQKLKQMKEAELRPVNSEMLIKLAHQISKHNSVSAPLTWQMGDPSRPFPQEHEFRAGHLLNSKVQSTGPQLLPGKNVAQRPLITSPSASSSNGGTAPIRTVGTPLINSAPTGDFSPRTGFGTDEPPPIQQQVLRGATPNEKQWQNPGVSGATSTQSPYNRVSQSPSSSPNVKLKITGLPNRPGGIDQVQDVRDVEQMSSDSSNSSDSSDDEGASKKTGSSNK.

Positions 71–100 (QEREQLIRTLEAHVEKRDEVIQQLETNLKS) form a coiled coil. Residues 193–334 (PLITSPSASS…ASKKTGSSNK (142 aa)) form a disordered region. 2 stretches are compositionally biased toward polar residues: residues 194–206 (LITS…SNGG) and 251–282 (NEKQ…SSPN).

This sequence belongs to the Mediator complex subunit 4 family. As to quaternary structure, component of the Mediator complex.

It localises to the nucleus. In terms of biological role, component of the Mediator complex, a coactivator involved in the regulated transcription of nearly all RNA polymerase II-dependent genes. Mediator functions as a bridge to convey information from gene-specific regulatory proteins to the basal RNA polymerase II transcription machinery. Mediator is recruited to promoters by direct interactions with regulatory proteins and serves as a scaffold for the assembly of a functional preinitiation complex with RNA polymerase II and the general transcription factors. This Caenorhabditis elegans protein is Mediator of RNA polymerase II transcription subunit 4 (mdt-4).